Consider the following 154-residue polypeptide: MSTRSVSSSSYRRMFGGPGTASRPSSTRSYVTTSTRTYSLGSALRPTTSRTLYTSSPGGVYATRSSAVRLRSGVPGVRLLQDSVDFSLADAINTEFKNTRTNEKVELQELNDRFANYIDKVRFLEQQNKILLAELEQLKGQGKSRLGHLYEEEM.

Positions 1-13 (MSTRSVSSSSYRR) are enriched in low complexity. Residues 1-31 (MSTRSVSSSSYRRMFGGPGTASRPSSTRSYV) are disordered. Ser2 carries the post-translational modification N-acetylserine. The head stretch occupies residues 2–95 (STRSVSSSSY…FSLADAINTE (94 aa)). Ser5 carries the phosphoserine modification. Ser7 is subject to Phosphoserine; by PKA and PKC; alternate. An O-linked (GlcNAc) serine; alternate glycan is attached at Ser7. Ser8 is modified (phosphoserine). Ser9 and Ser10 each carry phosphoserine; by PKC. Residue Thr20 is modified to Phosphothreonine. Ser25 is modified (phosphoserine; by PKA and PKC). At Ser26 the chain carries Phosphoserine; by PKC. Thr33 is a glycosylation site (O-linked (GlcNAc) threonine). Ser34 carries O-linked (GlcNAc) serine; alternate glycosylation. Ser34 bears the Phosphoserine; by PKC; alternate mark. Ser39 carries the post-translational modification Phosphoserine; by CaMK2, PKA, PKC and ROCK2. Ser42 carries the post-translational modification Phosphoserine; by PKC. Ser49 is subject to Phosphoserine. Tyr53 is modified (phosphotyrosine). Phosphoserine is present on Ser55. Ser56 bears the Phosphoserine; by CDK5 and CDK1 mark. At Tyr61 the chain carries Phosphotyrosine. Ser66 is modified (phosphoserine; by PKA and PKC). Ser72 is modified (phosphoserine; by AURKB and ROCK2). Ser83 carries the phosphoserine; by CaMK2 modification. A Phosphoserine modification is found at Ser87. The interval 96-131 (FKNTRTNEKVELQELNDRFANYIDKVRFLEQQNKIL) is coil 1A. Positions 96–131 (FKNTRTNEKVELQELNDRFANYIDKVRFLEQQNKIL) form a coiled coil. The IF rod domain maps to 103–154 (EKVELQELNDRFANYIDKVRFLEQQNKILLAELEQLKGQGKSRLGHLYEEEM). Residue Lys104 forms a Glycyl lysine isopeptide (Lys-Gly) (interchain with G-Cter in SUMO2) linkage. Tyr117 carries the phosphotyrosine modification. N6-acetyllysine; alternate is present on residues Lys120, Lys129, and Lys139. 2 positions are modified to N6-succinyllysine; alternate: Lys120 and Lys129. Glycyl lysine isopeptide (Lys-Gly) (interchain with G-Cter in SUMO2); alternate cross-links involve residues Lys120, Lys129, and Lys139. The tract at residues 132 to 153 (LAELEQLKGQGKSRLGHLYEEE) is linker 1. Residue Ser144 is modified to Phosphoserine. Residue Met154 is a region of interest, coil 1B.

Belongs to the intermediate filament family. As to quaternary structure, homomer assembled from elementary dimers. Identified in complexes that contain VIM, EZR, AHNAK, BFSP1, BFSP2, ANK2, PLEC, PRX and spectrin. Interacts with BCAS3. Interacts with LGSN. Interacts with SYNM. Interacts (via rod region) with PLEC (via CH 1 domain). Interacts with STK33. Interacts with LARP6. Interacts with RAB8B. Interacts with TOR1A; the interaction associates TOR1A with the cytoskeleton. Interacts with TOR1AIP1. Interacts with TOR1AIP1. Interacts with DIAPH1. Interacts with EPPK1; interaction is dependent of higher-order structure of intermediate filament. Interacts with the non-receptor tyrosine kinase SRMS; the interaction leads to phosphorylation of VIM. Interacts with NOD2. Interacts (via head region) with CORO1C. Interacts with HDGF. Interacts with PRKCE (via phorbol-ester/DAG-type 2 domain). Interacts with BFSP2. Interacts with PPL. Interacts with PKP1 and PKP2. Interacts with SCRIB (via PDZ domains); the interaction protects SCRIB from proteasomal degradation and facilitates SCRIB localization to intermediate filaments, the interaction is reduced by cell contact inhibition. One of the most prominent phosphoproteins in various cells of mesenchymal origin. Phosphorylation is enhanced during cell division, at which time vimentin filaments are significantly reorganized. Phosphorylation by PKN1 inhibits the formation of filaments. Filament disassembly during mitosis is promoted by phosphorylation at Ser-55 as well as by nestin. Phosphorylated at Ser-56 by CDK5 during neutrophil secretion in the cytoplasm. Phosphorylated by STK33. Phosphorylated on tyrosine residues by SRMS.

It is found in the cytoplasm. The protein resides in the cytoskeleton. Its subcellular location is the nucleus matrix. It localises to the cell membrane. Vimentins are class-III intermediate filaments found in various non-epithelial cells, especially mesenchymal cells. Vimentin is attached to the nucleus, endoplasmic reticulum, and mitochondria, either laterally or terminally. Plays a role in cell directional movement, orientation, cell sheet organization and Golgi complex polarization at the cell migration front. Protects SCRIB from proteasomal degradation and facilitates its localization to intermediate filaments in a cell contact-mediated manner. Functionally, involved with LARP6 in the stabilization of type I collagen mRNAs for CO1A1 and CO1A2. This Ovis aries (Sheep) protein is Vimentin (VIM).